The sequence spans 508 residues: Photosystem II CP47 reaction center protein (508 aa).

The next 6 membrane-spanning stretches (helical) occupy residues 21 to 36 (AVHL…WAGS), 101 to 115 (IVLS…IWHW), 140 to 156 (GIHL…FGAF), 203 to 218 (IAAG…FHLS), 237 to 252 (VLSS…AFVV), and 457 to 472 (TFAL…HGAR).

It belongs to the PsbB/PsbC family. PsbB subfamily. In terms of assembly, PSII is composed of 1 copy each of membrane proteins PsbA, PsbB, PsbC, PsbD, PsbE, PsbF, PsbH, PsbI, PsbJ, PsbK, PsbL, PsbM, PsbT, PsbX, PsbY, PsbZ, Psb30/Ycf12, at least 3 peripheral proteins of the oxygen-evolving complex and a large number of cofactors. It forms dimeric complexes. It depends on Binds multiple chlorophylls. PSII binds additional chlorophylls, carotenoids and specific lipids. as a cofactor.

The protein resides in the plastid. It localises to the chloroplast thylakoid membrane. One of the components of the core complex of photosystem II (PSII). It binds chlorophyll and helps catalyze the primary light-induced photochemical processes of PSII. PSII is a light-driven water:plastoquinone oxidoreductase, using light energy to abstract electrons from H(2)O, generating O(2) and a proton gradient subsequently used for ATP formation. This Marchantia polymorpha (Common liverwort) protein is Photosystem II CP47 reaction center protein.